Consider the following 373-residue polypeptide: 3-isopropylmalate dehydrogenase (373 aa).

82–93 (GPKWGTGTVRPE) is an NAD(+) binding site. Residues arginine 100, arginine 110, arginine 139, and aspartate 231 each contribute to the substrate site. 3 residues coordinate Mg(2+): aspartate 231, aspartate 256, and aspartate 260. Residue 295–306 (GSAPDLPANKVN) participates in NAD(+) binding.

Belongs to the isocitrate and isopropylmalate dehydrogenases family. In terms of assembly, homodimer. Mg(2+) is required as a cofactor. Requires Mn(2+) as cofactor.

Its subcellular location is the cytoplasm. It carries out the reaction (2R,3S)-3-isopropylmalate + NAD(+) = 4-methyl-2-oxopentanoate + CO2 + NADH. The protein operates within amino-acid biosynthesis; L-leucine biosynthesis; L-leucine from 3-methyl-2-oxobutanoate: step 3/4. Functionally, catalyzes the oxidation of 3-carboxy-2-hydroxy-4-methylpentanoate (3-isopropylmalate) to 3-carboxy-4-methyl-2-oxopentanoate. The product decarboxylates to 4-methyl-2 oxopentanoate. In Candida albicans (Yeast), this protein is 3-isopropylmalate dehydrogenase (LEU2).